The primary structure comprises 1008 residues: Translation initiation factor IF-2 (1008 aa).

3 disordered regions span residues 113-136, 153-235, and 253-405; these read AVTAQEAPKTAPTAESPEDVKGNV, DKDS…PAAP, and GLTV…YRKD. 2 stretches are compositionally biased toward basic and acidic residues: residues 153-180 and 189-213; these read DKDSKKSAKNTKPVEKVAAEKPIEKAKP and PKPEPKQETPKTEQPVKKETPKAET. 2 stretches are compositionally biased toward low complexity: residues 294–329 and 342–358; these read GPNKPAGANPNGPRPAGSNPNGPRPQGTNPNGPRPQ and GGPNRPGVPNRPNSNGP. Residues 365-381 are compositionally biased toward basic and acidic residues; the sequence is ASEKGEVTGKQIQDKIK. A tr-type G domain is found at 507-677; it reads DRAPIVTIMG…LLEAEMLELK (171 aa). The tract at residues 516-523 is G1; that stretch reads GHVDHGKT. Residue 516-523 participates in GTP binding; the sequence is GHVDHGKT. Residues 541 to 545 form a G2 region; sequence GITQH. Residues 563–566 are G3; sequence DTPG. Residues 563 to 567 and 617 to 620 each bind GTP; these read DTPGH and NKID. The segment at 617-620 is G4; sequence NKID. A G5 region spans residues 653–655; that stretch reads SAK.

The protein belongs to the TRAFAC class translation factor GTPase superfamily. Classic translation factor GTPase family. IF-2 subfamily.

Its subcellular location is the cytoplasm. Its function is as follows. One of the essential components for the initiation of protein synthesis. Protects formylmethionyl-tRNA from spontaneous hydrolysis and promotes its binding to the 30S ribosomal subunits. Also involved in the hydrolysis of GTP during the formation of the 70S ribosomal complex. The chain is Translation initiation factor IF-2 from Cytophaga hutchinsonii (strain ATCC 33406 / DSM 1761 / CIP 103989 / NBRC 15051 / NCIMB 9469 / D465).